The sequence spans 318 residues: Aspartate carbamoyltransferase catalytic subunit (318 aa).

Carbamoyl phosphate-binding residues include R59 and T60. Position 87 (K87) interacts with L-aspartate. The carbamoyl phosphate site is built by R109, H137, and Q140. R170 and R224 together coordinate L-aspartate. G265 and P266 together coordinate carbamoyl phosphate.

This sequence belongs to the aspartate/ornithine carbamoyltransferase superfamily. ATCase family. As to quaternary structure, heterododecamer (2C3:3R2) of six catalytic PyrB chains organized as two trimers (C3), and six regulatory PyrI chains organized as three dimers (R2).

It carries out the reaction carbamoyl phosphate + L-aspartate = N-carbamoyl-L-aspartate + phosphate + H(+). Its pathway is pyrimidine metabolism; UMP biosynthesis via de novo pathway; (S)-dihydroorotate from bicarbonate: step 2/3. Functionally, catalyzes the condensation of carbamoyl phosphate and aspartate to form carbamoyl aspartate and inorganic phosphate, the committed step in the de novo pyrimidine nucleotide biosynthesis pathway. This Rhizobium johnstonii (strain DSM 114642 / LMG 32736 / 3841) (Rhizobium leguminosarum bv. viciae) protein is Aspartate carbamoyltransferase catalytic subunit.